The sequence spans 670 residues: Pescadillo homolog (670 aa).

Positions Gly-292–Phe-321 form a coiled coil. A BRCT domain is found at Lys-316 to Ile-402. Residues Arg-643–Gln-670 form a disordered region. Positions Gln-644–Tyr-662 are enriched in basic and acidic residues.

The protein belongs to the pescadillo family.

The protein resides in the nucleus. The protein localises to the nucleolus. It is found in the nucleoplasm. Its function is as follows. Required for maturation of ribosomal RNAs and formation of the large ribosomal subunit. This chain is Pescadillo homolog, found in Leishmania braziliensis.